The sequence spans 196 residues: MRLIFLGPPGAGKGTQAKRLTDKYGIPQLSTGDMLRAAVSAGTEIGKRAKAVMDAGGLVSDDIVNQIVSERIEAPDCAKGFILDGYPRTVPQAKALADNMRKKNQVLDAVIELKVDEEALIRRIENRVAETIAAGGTVRSDDNPEAFRKRLTEYREKTAPLSAYYSEQGELVTLDGMADVDAVTEAIERVLEKASA.

ATP is bound at residue 10 to 15 (GAGKGT). An NMP region spans residues 30–59 (STGDMLRAAVSAGTEIGKRAKAVMDAGGLV). AMP-binding positions include Thr31, Arg36, 57–59 (GLV), 85–88 (GYPR), and Gln92. Residues 126–142 (NRVAETIAAGGTVRSDD) form an LID region. Arg127 is an ATP binding site. AMP contacts are provided by Arg139 and Arg150. Ala178 contacts ATP.

This sequence belongs to the adenylate kinase family. In terms of assembly, monomer.

Its subcellular location is the cytoplasm. The catalysed reaction is AMP + ATP = 2 ADP. The protein operates within purine metabolism; AMP biosynthesis via salvage pathway; AMP from ADP: step 1/1. In terms of biological role, catalyzes the reversible transfer of the terminal phosphate group between ATP and AMP. Plays an important role in cellular energy homeostasis and in adenine nucleotide metabolism. The chain is Adenylate kinase from Agrobacterium fabrum (strain C58 / ATCC 33970) (Agrobacterium tumefaciens (strain C58)).